A 495-amino-acid polypeptide reads, in one-letter code: Bifunctional protein GlmU (495 aa).

Residues 1–241 (MTFPGDTAVL…SALVAGVNNR (241 aa)) form a pyrophosphorylase region. Residues 12 to 15 (LAAG), Lys26, Gln83, 88 to 89 (GT), 112 to 114 (SGD), Gly151, Glu166, Asn181, and Asn239 contribute to the UDP-N-acetyl-alpha-D-glucosamine site. Asp114 provides a ligand contact to Mg(2+). Asn239 is a binding site for Mg(2+). A linker region spans residues 242 to 262 (VQLAQLASELNRRVVAAHQLA). An N-acetyltransferase region spans residues 263–495 (GVTVVDPATT…TQPPDADQTP (233 aa)). UDP-N-acetyl-alpha-D-glucosamine is bound by residues Arg344 and Lys362. Residue His374 is the Proton acceptor of the active site. Positions 377 and 388 each coordinate UDP-N-acetyl-alpha-D-glucosamine. Residues Ala391, 397–398 (NY), Ser416, and Ala434 each bind acetyl-CoA. The segment at 457-495 (IENWVQRKRPGSPAAQASKRASEMACQQPTQPPDADQTP) is disordered. Over residues 483–495 (QQPTQPPDADQTP) the composition is skewed to low complexity.

In the N-terminal section; belongs to the N-acetylglucosamine-1-phosphate uridyltransferase family. The protein in the C-terminal section; belongs to the transferase hexapeptide repeat family. In terms of assembly, homotrimer. Requires Mg(2+) as cofactor.

The protein resides in the cytoplasm. It carries out the reaction alpha-D-glucosamine 1-phosphate + acetyl-CoA = N-acetyl-alpha-D-glucosamine 1-phosphate + CoA + H(+). The enzyme catalyses N-acetyl-alpha-D-glucosamine 1-phosphate + UTP + H(+) = UDP-N-acetyl-alpha-D-glucosamine + diphosphate. It functions in the pathway nucleotide-sugar biosynthesis; UDP-N-acetyl-alpha-D-glucosamine biosynthesis; N-acetyl-alpha-D-glucosamine 1-phosphate from alpha-D-glucosamine 6-phosphate (route II): step 2/2. It participates in nucleotide-sugar biosynthesis; UDP-N-acetyl-alpha-D-glucosamine biosynthesis; UDP-N-acetyl-alpha-D-glucosamine from N-acetyl-alpha-D-glucosamine 1-phosphate: step 1/1. The protein operates within bacterial outer membrane biogenesis; LPS lipid A biosynthesis. Catalyzes the last two sequential reactions in the de novo biosynthetic pathway for UDP-N-acetylglucosamine (UDP-GlcNAc). The C-terminal domain catalyzes the transfer of acetyl group from acetyl coenzyme A to glucosamine-1-phosphate (GlcN-1-P) to produce N-acetylglucosamine-1-phosphate (GlcNAc-1-P), which is converted into UDP-GlcNAc by the transfer of uridine 5-monophosphate (from uridine 5-triphosphate), a reaction catalyzed by the N-terminal domain. This chain is Bifunctional protein GlmU, found in Mycobacterium bovis (strain ATCC BAA-935 / AF2122/97).